The primary structure comprises 387 residues: uncharacterized protein (387 aa).

Disordered stretches follow at residues 1 to 126 (MDGR…GDDE), 138 to 169 (GNQGGLVPGLAPIPSENENGKNDIEKNNRNEE), and 275 to 298 (SSIFSDSQAVTTDDEGISSTAGNK). A compositionally biased stretch (basic and acidic residues) spans 32–45 (SSDHRTSNSAESKK). Composition is skewed to polar residues over residues 49–63 (SGKSISDLGISNNDN) and 78–93 (DLSSRSTETSDNSKGT). Residues 155-169 (ENGKNDIEKNNRNEE) show a composition bias toward basic and acidic residues. Residues 275-296 (SSIFSDSQAVTTDDEGISSTAG) show a composition bias toward polar residues.

Belongs to the ThrE exporter (TC 2.A.79) family.

This is an uncharacterized protein from Saccharomyces cerevisiae (strain ATCC 204508 / S288c) (Baker's yeast).